The chain runs to 1353 residues: DNA-directed RNA polymerase subunit beta' (1353 aa).

The unknown stretch occupies residues 1-117 (MSDNRLFTSV…AFQKLNDLFK (117 aa)). Residues 118–1353 (LYNHFPSISS…SELAEKTNQN (1236 aa)) are DNA-directed RNA polymerase subunit beta'. Residues cysteine 189, cysteine 191, cysteine 203, and cysteine 206 each contribute to the Zn(2+) site. Residues aspartate 578, aspartate 580, and aspartate 582 each coordinate Mg(2+).

Belongs to the RNA polymerase beta' chain family. As to quaternary structure, the RNAP catalytic core consists of 2 alpha, 1 beta, 1 beta' and 1 omega subunit. When a sigma factor is associated with the core the holoenzyme is formed, which can initiate transcription. Mg(2+) is required as a cofactor. The cofactor is Zn(2+).

The catalysed reaction is RNA(n) + a ribonucleoside 5'-triphosphate = RNA(n+1) + diphosphate. Functionally, DNA-dependent RNA polymerase catalyzes the transcription of DNA into RNA using the four ribonucleoside triphosphates as substrates. This is DNA-directed RNA polymerase subunit beta' from Onion yellows phytoplasma (strain OY-M).